The sequence spans 161 residues: M-phase phosphoprotein 6 (161 aa).

Residues lysine 37 and lysine 86 each participate in a glycyl lysine isopeptide (Lys-Gly) (interchain with G-Cter in SUMO2) cross-link. Serine 111 carries the phosphoserine modification. Residues arginine 117–arginine 134 carry the Nuclear localization signal motif. Residues lysine 128, lysine 151, and lysine 154 each participate in a glycyl lysine isopeptide (Lys-Gly) (interchain with G-Cter in SUMO2) cross-link.

This sequence belongs to the MPP6 family. As to quaternary structure, associates with the RNA exosome complex, mediated by EXOSC3. Interacts with ARHGAP18. Interacts with exosome cofactors EXOSC10 and MTREX. Post-translationally, phosphorylated in M (mitotic) phase.

The protein localises to the nucleus. It localises to the nucleolus. The protein resides in the cytoplasm. Functionally, RNA-binding protein that associates with the RNA exosome complex. Involved in the 3'-processing of the 7S pre-RNA to the mature 5.8S rRNA and plays a role in recruiting the RNA exosome complex to pre-rRNA; this function may include C1D. The chain is M-phase phosphoprotein 6 from Mus musculus (Mouse).